Here is a 346-residue protein sequence, read N- to C-terminus: D-alanine--D-alanine ligase (346 aa).

The ATP-grasp domain maps to 133–324 (KLYAQSVGVK…IVDNLAKNIE (192 aa)). 159-211 (LSFPCILKPARLGSSIGISIVKDESELKYAKDVAFEFDEDVVVEQFVSNIKEY) contacts ATP. Mg(2+)-binding residues include Asp-284, Glu-296, and Asn-298.

This sequence belongs to the D-alanine--D-alanine ligase family. The cofactor is Mg(2+). Mn(2+) is required as a cofactor.

It localises to the cytoplasm. The catalysed reaction is 2 D-alanine + ATP = D-alanyl-D-alanine + ADP + phosphate + H(+). It functions in the pathway cell wall biogenesis; peptidoglycan biosynthesis. In terms of biological role, cell wall formation. This chain is D-alanine--D-alanine ligase, found in Campylobacter lari (strain RM2100 / D67 / ATCC BAA-1060).